The following is a 300-amino-acid chain: Acetaldehyde dehydrogenase 1 (300 aa).

11–14 (SGNI) contributes to the NAD(+) binding site. Cys-126 (acyl-thioester intermediate) is an active-site residue. NAD(+) contacts are provided by residues 157–165 (SAGPGTRAN) and Asn-276.

The protein belongs to the acetaldehyde dehydrogenase family.

It carries out the reaction acetaldehyde + NAD(+) + CoA = acetyl-CoA + NADH + H(+). This is Acetaldehyde dehydrogenase 1 from Rhodococcus erythropolis (strain PR4 / NBRC 100887).